The sequence spans 478 residues: Cytochrome c-552 (478 aa).

Positions 1–26 (MARKTLRARRFFSLIFPFFFITSVYA) are cleaved as a signal peptide. Histidine 94 contributes to the heme c binding site. Heme contacts are provided by cysteine 122, cysteine 125, and lysine 126. 6 residues coordinate heme c: cysteine 160, cysteine 163, histidine 164, cysteine 209, cysteine 212, and histidine 213. Ca(2+) is bound by residues glutamate 215, tyrosine 216, lysine 261, and glutamine 263. Tyrosine 216 contacts substrate. Substrate is bound at residue histidine 264. Positions 275, 282, 285, 286, 301, 314, 317, 318, and 393 each coordinate heme c.

It belongs to the cytochrome c-552 family. It depends on Ca(2+) as a cofactor. The cofactor is heme c.

The protein resides in the periplasm. It carries out the reaction 6 Fe(III)-[cytochrome c] + NH4(+) + 2 H2O = 6 Fe(II)-[cytochrome c] + nitrite + 8 H(+). It participates in nitrogen metabolism; nitrate reduction (assimilation). Its function is as follows. Catalyzes the reduction of nitrite to ammonia, consuming six electrons in the process. The chain is Cytochrome c-552 from Salmonella paratyphi C (strain RKS4594).